Reading from the N-terminus, the 591-residue chain is MGTARIAPSLALLLCCPVLSSAYALVDADDVFTKEEQIFLLHRAQAQCDKLLKEVLHTAANIMESDKGWTPASTSGKPRKEKAPGKFYPESKENKDVPTGSRRRGRPCLPEWDNIVCWPLGAPGEVVAVPCPDYIYDFNHKGHAYRRCDRNGSWEVVPGHNRTWANYSECLKFMTNETREREVFDRLGMIYTVGYSMSLASLTVAVLILAYFRRLHCTRNYIHMHMFLSFMLRAASIFVKDAVLYSGFTLDEAERLTEEELHIIAQVPPPPAAAAVGYAGCRVAVTFFLYFLATNYYWILVEGLYLHSLIFMAFFSEKKYLWGFTIFGWGLPAVFVAVWVGVRATLANTGCWDLSSGHKKWIIQVPILASVVLNFILFINIIRVLATKLRETNAGRCDTRQQYRKLLRSTLVLVPLFGVHYTVFMALPYTEVSGTLWQIQMHYEMLFNSFQGFFVAIIYCFCNGEVQAEIRKSWSRWTLALDFKRKARSGSSSYSYGPMVSHTSVTNVGPRAGLSLPLSPRLLPATTNGHSQLPGHAKPGAPAIENETIPVTMTVPKDDGFLNGSCSGLDEEASGSARPPPLLQEEWETVM.

Residues methionine 1–valine 26 form the signal peptide. Over aspartate 27 to glycine 188 the chain is Extracellular. Intrachain disulfides connect cysteine 48-cysteine 117, cysteine 108-cysteine 148, and cysteine 131-cysteine 170. The disordered stretch occupies residues lysine 67–arginine 104. Over residues glutamate 81 to aspartate 96 the composition is skewed to basic and acidic residues. Residues asparagine 151, asparagine 161, asparagine 166, and asparagine 176 are each glycosylated (N-linked (GlcNAc...) asparagine). A helical membrane pass occupies residues methionine 189–phenylalanine 212. Residues arginine 213–arginine 219 lie on the Cytoplasmic side of the membrane. Residues asparagine 220–valine 239 traverse the membrane as a helical segment. Topologically, residues lysine 240–arginine 282 are extracellular. Residues valine 283–leucine 306 traverse the membrane as a helical segment. The Cytoplasmic segment spans residues histidine 307 to tyrosine 320. The chain crosses the membrane as a helical span at residues leucine 321–valine 342. The Extracellular portion of the chain corresponds to arginine 343–tryptophan 361. A helical transmembrane segment spans residues isoleucine 362 to isoleucine 382. Residues arginine 383–serine 409 lie on the Cytoplasmic side of the membrane. The chain crosses the membrane as a helical span at residues threonine 410–proline 428. Residues tyrosine 429–glutamine 440 are Extracellular-facing. The helical transmembrane segment at methionine 441–asparagine 463 threads the bilayer. Topologically, residues glycine 464–methionine 591 are cytoplasmic. Positions tryptophan 474–tryptophan 477 match the Important for interaction with G proteins motif.

The protein belongs to the G-protein coupled receptor 2 family. Homodimer in the absence of bound ligand. Peptide hormone binding leads to dissociation of the homodimer. In terms of processing, N-glycosylated. Detected in kidney.

Its subcellular location is the cell membrane. G-protein-coupled receptor for parathyroid hormone (PTH) and for parathyroid hormone-related peptide (PTHLH). Ligand binding causes a conformation change that triggers signaling via guanine nucleotide-binding proteins (G proteins) and modulates the activity of downstream effectors, such as adenylate cyclase (cAMP). PTH1R is coupled to G(s) G alpha proteins and mediates activation of adenylate cyclase activity. PTHLH dissociates from PTH1R more rapidly than PTH; as consequence, the cAMP response induced by PTHLH decays faster than the response induced by PTH. This Mus musculus (Mouse) protein is Parathyroid hormone/parathyroid hormone-related peptide receptor (Pth1r).